We begin with the raw amino-acid sequence, 291 residues long: N-acetylmannosamine kinase (291 aa).

ATP is bound by residues 5 to 12 (AIDIGGTK) and 132 to 139 (GVGGGVVS). Zn(2+) is bound by residues H156, C166, C168, and C173.

This sequence belongs to the ROK (NagC/XylR) family. NanK subfamily. As to quaternary structure, homodimer.

It carries out the reaction an N-acyl-D-mannosamine + ATP = an N-acyl-D-mannosamine 6-phosphate + ADP + H(+). The protein operates within amino-sugar metabolism; N-acetylneuraminate degradation; D-fructose 6-phosphate from N-acetylneuraminate: step 2/5. Functionally, catalyzes the phosphorylation of N-acetylmannosamine (ManNAc) to ManNAc-6-P. This is N-acetylmannosamine kinase from Escherichia coli (strain 55989 / EAEC).